The chain runs to 258 residues: Type III pantothenate kinase (258 aa).

Asp7–Lys14 contributes to the ATP binding site. Substrate-binding positions include Tyr96 and Gly103 to Arg106. Asp105 (proton acceptor) is an active-site residue. Thr133 is an ATP binding site. Residue Thr183 participates in substrate binding.

Belongs to the type III pantothenate kinase family. As to quaternary structure, homodimer. NH4(+) is required as a cofactor. It depends on K(+) as a cofactor.

It localises to the cytoplasm. It catalyses the reaction (R)-pantothenate + ATP = (R)-4'-phosphopantothenate + ADP + H(+). The protein operates within cofactor biosynthesis; coenzyme A biosynthesis; CoA from (R)-pantothenate: step 1/5. Its function is as follows. Catalyzes the phosphorylation of pantothenate (Pan), the first step in CoA biosynthesis. In Acidovorax ebreus (strain TPSY) (Diaphorobacter sp. (strain TPSY)), this protein is Type III pantothenate kinase.